We begin with the raw amino-acid sequence, 137 residues long: Nucleoside diphosphate kinase (137 aa).

ATP is bound by residues lysine 9, phenylalanine 57, arginine 85, threonine 91, arginine 102, and asparagine 112. The Pros-phosphohistidine intermediate role is filled by histidine 115.

The protein belongs to the NDK family. In terms of assembly, homotetramer. Mg(2+) serves as cofactor.

It is found in the cytoplasm. It catalyses the reaction a 2'-deoxyribonucleoside 5'-diphosphate + ATP = a 2'-deoxyribonucleoside 5'-triphosphate + ADP. It carries out the reaction a ribonucleoside 5'-diphosphate + ATP = a ribonucleoside 5'-triphosphate + ADP. Major role in the synthesis of nucleoside triphosphates other than ATP. The ATP gamma phosphate is transferred to the NDP beta phosphate via a ping-pong mechanism, using a phosphorylated active-site intermediate. The sequence is that of Nucleoside diphosphate kinase from Geotalea daltonii (strain DSM 22248 / JCM 15807 / FRC-32) (Geobacter daltonii).